A 601-amino-acid polypeptide reads, in one-letter code: Tubulin polyglutamylase ttll-4 (601 aa).

Residues 1 to 18 (MSSGYSSAPSVSHTSSDT) show a composition bias toward polar residues. The interval 1-37 (MSSGYSSAPSVSHTSSDTDLNRIDSYDDGAEETTDEQ) is disordered. The region spanning 138–476 (QARLTWCHNS…YVPPSFDKLS (339 aa)) is the TTL domain. Residues lysine 254, 260–261 (RG), 282–285 (QHYI), and 295–297 (KFD) contribute to the ATP site. A protein is bound at residue arginine 260. Arginine 321 provides a ligand contact to L-glutamate. 342–343 (TN) contributes to the ATP binding site. Residues tyrosine 344, serine 345, and lysine 362 each contribute to the L-glutamate site. Mg(2+) contacts are provided by aspartate 422, glutamate 435, and asparagine 437. Lysine 453 contributes to the L-glutamate binding site.

The protein belongs to the tubulin--tyrosine ligase family. The cofactor is Mg(2+). In terms of tissue distribution, expressed in many sensory neurons in amphid.

The enzyme catalyses L-glutamyl-[protein] + L-glutamate + ATP = gamma-L-glutamyl-L-glutamyl-[protein] + ADP + phosphate + H(+). Its function is as follows. Monoglutamylase which modifies tubulin, adding a single glutamate on the gamma-carboxyl group of specific glutamate residues of target proteins. Involved in the side-chain initiation step of the polyglutamylation reaction but not in the elongation step. Preferentially modifies beta-tail tubulin over the alpha-tubulin. Involved in side-chain glutamylation of tubulin in sensory cilia. Together with ttll-5 and ttll-11, required for male mating. The sequence is that of Tubulin polyglutamylase ttll-4 from Caenorhabditis elegans.